The chain runs to 1058 residues: Non-canonical non-ribosomal peptide synthetase FUB8 (1058 aa).

The interval 43–365 is adenylation (A) domain; sequence EISRDEPDRV…LASVVMHPDE (323 aa). The 78-residue stretch at 566–643 folds into the Carrier domain; that stretch reads TTEDVVRSGI…QLSHSVWTHL (78 aa). Residue Ser601 is modified to O-(pantetheine 4'-phosphoryl)serine. The interval 680-921 is thioester reductase (TR) domain; sequence LTGTTGEIGS…IPIDLLAEVI (242 aa).

It functions in the pathway mycotoxin biosynthesis. Functionally, non-canonical non-ribosomal peptide synthetase; part of the gene cluster that mediates the biosynthesis of fusaric acid, a mycotoxin with low to moderate toxicity to animals and humans, but with high phytotoxic properties. L-aspartate is suggested as fusaric acid amino acid precursor that is activated and further processed to O-acetyl-L-homoserine by cluster enzymes aspartate kinase FUB3 and homoserine O-acetyltransferase FUB5, as well as enzymes of the primary metabolism. The polyketide synthase (PKS) FUB1 generates the triketide trans-2-hexenal which is presumptively released by the hydrolase FUB4 and linked to the NRPS-bound amino acid precursor by NAD(P)-dependent dehydrogenase FUB6. FUB1, FUB4, and the non-canonical NRPS Fub8 may form an enzyme complex. Further processing of the NRPS-bound intermediate might be carried out by FUB6 and the sulfhydrylase FUB7, enabling a spontaneous electrocyclization to close the carbon backbone of fusaric acid. Dihydrofusaric acid is likely to be released via reduction by the thioester reductase (TR) domain of FUB8 whereupon the final oxidation to fusaric acid may (also) be performed by the FMN-dependent dehydrogenase FUB9. The chain is Non-canonical non-ribosomal peptide synthetase FUB8 from Gibberella moniliformis (strain M3125 / FGSC 7600) (Maize ear and stalk rot fungus).